An 818-amino-acid polypeptide reads, in one-letter code: Sodium/hydrogen exchanger 1 (818 aa).

Over 1 to 98 the chain is Extracellular; the sequence is MLLWSGICGL…FPVLGIDYTH (98 aa). The interval 39–76 is disordered; the sequence is PSPTASTIRGSEPPRERSIGDVTTAPPELAPESRPVNH. A glycan (N-linked (GlcNAc...) asparagine) is linked at Asn75. The chain crosses the membrane as a helical span at residues 99 to 121; that stretch reads VRTPFEISLWILLACLMKIGFHV. At 122–130 the chain is on the cytoplasmic side; that stretch reads IPTISSIVP. Residues 131–148 traverse the membrane as a helical segment; sequence ESCLLIVVGLLVGGLIKA. Residues 149–158 lie on the Extracellular side of the membrane; it reads VGETPPFLQS. A helical transmembrane segment spans residues 159–176; the sequence is EVFFLFLLPPIILDAGYF. At 177 to 186 the chain is on the cytoplasmic side; that stretch reads LPLRQFTENL. A helical membrane pass occupies residues 187-215; it reads GTILIFAVVGTLWNAFFLGGLMYAVCLVG. The Extracellular segment spans residues 216–222; sequence GEQINNI. Residues 223 to 249 form a helical membrane-spanning segment; sequence GLLDNLLFGSIISAVDPVAVLAVFEEI. Topologically, residues 250-252 are cytoplasmic; the sequence is HIN. A helical transmembrane segment spans residues 253 to 283; the sequence is ELLHILVFGESLLNDAVTVVLYHLFEEFANY. The Extracellular segment spans residues 284 to 287; the sequence is DRVG. Residues 288–322 traverse the membrane as a helical segment; it reads IVDIVLGFLSFFVVSLGGVFVGVVYGVIAAFTSRF. Over 323–328 the chain is Cytoplasmic; it reads TSHIRV. Residues 329 to 341 form a helical membrane-spanning segment; sequence IEPLFVFLYSYMA. The Extracellular portion of the chain corresponds to 342 to 350; it reads YLSAELFHL. A helical transmembrane segment spans residues 351–371; that stretch reads SGIMALIASGVVMRPYVEANI. At 372 to 373 the chain is on the cytoplasmic side; that stretch reads SH. A helical transmembrane segment spans residues 374 to 404; the sequence is KSHTTIKYFLKMWSSVSETLIFIFLGVSTVA. At 405–410 the chain is on the extracellular side; that stretch reads GSHHWN. A helical transmembrane segment spans residues 411–438; it reads WTFVISTLLFCLIARVLGVLGLTWFINK. The Cytoplasmic portion of the chain corresponds to 439 to 444; sequence FRIVKL. The helical transmembrane segment at 445–469 threads the bilayer; sequence TPKDQFIIAYGGLRGAIAFSLGHLL. Over 470–475 the chain is Extracellular; that stretch reads DKNHFP. A helical transmembrane segment spans residues 476-505; that stretch reads MCDLFLTAIITVIFFTVFVQGMTIRPLVDL. The interval 503 to 545 is interaction with TESC; the sequence is VDLLAVKKKQETKRSINEEIHTQFLDHLLTGIEDICGHYGHHH. The Cytoplasmic portion of the chain corresponds to 506-818; that stretch reads LAVKKKQETK…EGEPFIPKGQ (313 aa). The tract at residues 509 to 516 is PI(4,5)P2-binding region; it reads KKKQETKR. The interaction with CHP2 stretch occupies residues 515–545; the sequence is KRSINEEIHTQFLDHLLTGIEDICGHYGHHH. Residues 540–545 form a confers pH-dependent PI(4,5)P2 binding region; sequence HYGHHH. Positions 552–560 are PI(4,5)P2-binding region; the sequence is RFNKKYVKK. Phosphoserine is present on residues Ser599 and Ser602. Thr603 is modified (phosphothreonine). 2 positions are modified to phosphoserine: Ser605 and Ser648. Positions 633–818 are interaction with TESC; sequence KILRNNLQKT…EGEPFIPKGQ (186 aa). The segment at 633-818 is interaction with CALM1; the sequence is KILRNNLQKT…EGEPFIPKGQ (186 aa). Positions 684-687 are interaction with PPP3CA; it reads LTVP. 3 positions are modified to phosphoserine: Ser693, Ser697, and Ser703. The interval 715-720 is interaction with PPP3CA; that stretch reads PVITID. Ser723, Ser726, and Ser729 each carry phosphoserine. The segment at 739-818 is disordered; sequence GKVLGLSREP…EGEPFIPKGQ (80 aa). Residues Thr752 and Thr782 each carry the phosphothreonine modification. Residues 785–794 show a composition bias toward polar residues; that stretch reads PSDSPSSQRI. A phosphoserine mark is found at Ser788, Ser790, and Ser799.

It belongs to the monovalent cation:proton antiporter 1 (CPA1) transporter (TC 2.A.36) family. In terms of assembly, homodimer; dimerization is crucial for its function. Oligomer. Interacts with CALM in a calcium-dependent manner. Interacts with TESC. Interacts (via the juxtamembrane region of the cytoplasmic C-terminal domain) with CHP1; the interaction occurs at the plasma membrane in a calcium-dependent manner. Interacts with CHP2; the interaction occurs in a calcium-dependent manner. Interacts with EZR; regulates the cytoskeletal interactions of SLC9A1 and promotes stress fiber formation. In terms of processing, ubiquitinated, leading to its degradation by the proteasome. Ubiquitination is reduced by CHP1. Post-translationally, O-glycosylated. Palmitoylated; may play a major role in SLC9A1 regulation. In terms of processing, phosphorylation at Thr-782 increases SLC9A1 activity. Specifically dephosphorylated at Thr-782 by PPP3CA that negatively regulates SLC9A1 activity. Phosphorylation at Ser-648 by AKT1 reduces SLC9A1 binding to CALM1.

The protein resides in the cell membrane. Its subcellular location is the basolateral cell membrane. The enzyme catalyses Na(+)(in) + H(+)(out) = Na(+)(out) + H(+)(in). The catalysed reaction is Li(+)(out) + H(+)(in) = Li(+)(in) + H(+)(out). It catalyses the reaction Li(+)(in) + Na(+)(out) = Li(+)(out) + Na(+)(in). With respect to regulation, activated at acidic pHs. Inhibited by cariporide and eniporide. Inhibited by amiloride and 5-amino-substituted derivatives. Phosphatidylinositol 4,5-bisphosphate (PI(4,5)P2) and phosphatidylinositol 3,4,5-trisphosphate (PI(3,4,5)P3) bind and differentially regulate SLC9A1 activity. Electroneutral Na(+) /H(+) antiporter that extrudes Na(+) in exchange for external protons driven by the inward sodium ion chemical gradient, protecting cells from acidification that occurs from metabolism. Exchanges intracellular H(+) ions for extracellular Na(+) in 1:1 stoichiometry. Plays a key role in maintening intracellular pH neutral and cell volume, and thus is important for cell growth, proliferation, migration and survival. In addition, can transport lithium Li(+) and also functions as a Na(+)/Li(+) antiporter. SLC9A1 also functions in membrane anchoring and organization of scaffolding complexes that coordinate signaling inputs. The chain is Sodium/hydrogen exchanger 1 (SLC9A1) from Sus scrofa (Pig).